Reading from the N-terminus, the 991-residue chain is Glutamate receptor 1 (991 aa).

The signal sequence occupies residues 1–27; that stretch reads MHSRLKFLAYLHFICASSIFWPEFSSA. Residues 28–611 lie on the Extracellular side of the membrane; sequence QQQQQTVSLT…VFSFLNPLSQ (584 aa). N-linked (GlcNAc...) asparagine glycosylation is found at Asn67, Asn195, Asn208, and Asn281. 2 disordered regions span residues 300 to 321 and 354 to 379; these read DSRK…GPNS and FRSN…NESS. Polar residues predominate over residues 308-318; the sequence is SGQSQSQNAGG. Low complexity predominate over residues 365–379; the sequence is GGSSSSSATGTNESS. 5 N-linked (GlcNAc...) asparagine glycosylation sites follow: Asn376, Asn385, Asn426, Asn437, and Asn477. Residues 612–632 form a helical membrane-spanning segment; that stretch reads EIWISVILSYVGVSFVLYFVT. Residues 633–710 are Cytoplasmic-facing; it reads RFPPYEWRIV…PSIAGRIAAA (78 aa). A helical membrane pass occupies residues 711 to 731; that stretch reads VWWFFTIILISSYTANLAAFL. Topologically, residues 732–895 are extracellular; sequence TVERMVAPIK…STPNELSLSN (164 aa). A helical transmembrane segment spans residues 896–916; it reads VAGIYYILIGGLLLAVIVAIM. Topologically, residues 917–991 are cytoplasmic; sequence EFFCRNKTPQ…ASNVRYQYSM (75 aa).

It belongs to the glutamate-gated ion channel (TC 1.A.10.1) family. In terms of assembly, homooligomer. Central nervous system.

It is found in the cell membrane. The protein resides in the postsynaptic cell membrane. In terms of biological role, receptor for glutamate. L-glutamate acts as an excitatory neurotransmitter at many synapses in the central nervous system. The postsynaptic actions of Glu are mediated by a variety of receptors that are named according to their selective agonists. Forms ligand-gated ion channels which are activated by kainate. The protein is Glutamate receptor 1 (GluRIA) of Drosophila melanogaster (Fruit fly).